Here is a 1226-residue protein sequence, read N- to C-terminus: E3 ubiquitin-protein ligase mind-bomb (1226 aa).

The span at 1-12 (MSCAATLSSAKD) shows a compositional bias: polar residues. Disordered stretches follow at residues 1-42 (MSCA…NTNT) and 66-87 (GGGG…AGGV). Over residues 19–30 (SGGGGGGGGGGA) the composition is skewed to gly residues. Low complexity-rich tracts occupy residues 31–42 (PTNSNTNTNTNT) and 73–86 (GGTT…AAGG). An MIB/HERC2 1 domain is found at 100-168 (VRRFSMEGVG…AYDLRILDSA (69 aa)). The segment at 174–226 (HEGTMCDTCRQQPIFGIRWKCAECINYDLCSICYHGDKHHLRHRFYRITTPGG) adopts a ZZ-type zinc-finger fold. Zn(2+)-binding residues include C179, C182, C194, C197, C203, C206, H212, and H216. Residues 237-315 (SKKVLARGIF…MADLKVVNDA (79 aa)) enclose the MIB/HERC2 2 domain. ANK repeat units lie at residues 567 to 596 (AGHT…DVEI), 600 to 629 (DGDR…DLNA), 633 to 662 (RRQT…HPSL), 666 to 695 (EGDT…DITL), 699 to 731 (NGFN…IVEE), 735 to 765 (DGYT…NMDR), 769 to 798 (NLQT…DLNI), and 802 to 833 (DGDT…KLLM). The disordered stretch occupies residues 890–919 (TDDSELPGNVAGTSSSARARAASGSLNQSS). Residues 900-914 (AGTSSSARARAASGS) are compositionally biased toward low complexity. 2 RING-type zinc fingers span residues 970–1005 (CLVC…LICR) and 1017–1052 (CLVC…VLCR). The stretch at 1159–1181 (VNNFQMDDVQKLKQQLQDIKEQT) forms a coiled coil. The RING-type 3 zinc finger occupies 1183-1216 (CPVCFDRIKNMVFLCGHGTCQMCGDQIEGCPICR).

Interacts with intracellular domain of Dl and Ser. As to expression, ubiquitous in the wing imaginal disk (at protein level).

The protein localises to the cytoplasm. It is found in the cell cortex. It carries out the reaction S-ubiquitinyl-[E2 ubiquitin-conjugating enzyme]-L-cysteine + [acceptor protein]-L-lysine = [E2 ubiquitin-conjugating enzyme]-L-cysteine + N(6)-ubiquitinyl-[acceptor protein]-L-lysine.. It participates in protein modification; protein ubiquitination. E3 ubiquitin-protein ligase that mediates ubiquitination of Delta (Dl) and Serrate (Ser) receptors, which act as ligands of Notch proteins. Positively regulates the Notch signaling by ubiquitinating the intracellular domain of Dl and Ser, leading to endocytosis of Dl and Ser receptors. Regulates a subset of Notch signaling events, including wing margin specification, leg segmentation and vein determination, that are distinct from those events requiring neuralize (neur) activity. Also modulates lateral inhibition, a neur- and Dl-dependent signaling event, suggesting a distinct but partially complementary function with neur. This is E3 ubiquitin-protein ligase mind-bomb (mib1) from Drosophila melanogaster (Fruit fly).